Consider the following 131-residue polypeptide: Protein Turandot M (131 aa).

The N-terminal stretch at 1–23 (MNPTIYLSCLMVFSVFLLGKVNA) is a signal peptide.

It belongs to the Turandot family.

Its subcellular location is the secreted. A humoral factor that may play a role in stress tolerance. Requires Mekk1 expression in the fat body to regulate response to septic injury and consequent immune response. In Drosophila melanogaster (Fruit fly), this protein is Protein Turandot M.